A 212-amino-acid chain; its full sequence is MVGGGGVKFIEMDIRDKEAYELAKEWFDEVVVSIKFNEEVDKEKLREARKEYGKVAILLSNPKPSLVRDTVQKFKSYLIYVESNDLRVIRYSIEKGVDAIISPWVNRKDPGIDHVLAKLMVKKNVALGFSLRPLLYSNPYERANLLRFMMKAWKLVEKYKVRRFLTSSAQEKWDVRYPRDLISLGVVIGMEIPQAKASISMYPEIILKRLKY.

It belongs to the eukaryotic/archaeal RNase P protein component 3 family. Consists of a catalytic RNA component and at least 5 protein subunits. Forms a heterotetrameric subcomplex with Rnp2. Reconstituted enzyme missing individual protein subunits is suboptimally active, showing each subunit contributes to optimization of activity.

The protein resides in the cytoplasm. The enzyme catalyses Endonucleolytic cleavage of RNA, removing 5'-extranucleotides from tRNA precursor.. Its function is as follows. Part of ribonuclease P, a protein complex that generates mature tRNA molecules by cleaving their 5'-ends. Not absolutely essential for activity in vitro, however it strongly stimulates activity. Binds RNase P RNA. In Pyrococcus horikoshii (strain ATCC 700860 / DSM 12428 / JCM 9974 / NBRC 100139 / OT-3), this protein is Ribonuclease P protein component 3.